A 355-amino-acid polypeptide reads, in one-letter code: Protein RecA (355 aa).

69–76 (GPESSGKT) contributes to the ATP binding site. The interval 329–355 (AYGLPDREETKREETAQIPDTEKTKDV) is disordered.

Belongs to the RecA family.

It is found in the cytoplasm. Its function is as follows. Can catalyze the hydrolysis of ATP in the presence of single-stranded DNA, the ATP-dependent uptake of single-stranded DNA by duplex DNA, and the ATP-dependent hybridization of homologous single-stranded DNAs. It interacts with LexA causing its activation and leading to its autocatalytic cleavage. The polypeptide is Protein RecA (Desulfotalea psychrophila (strain LSv54 / DSM 12343)).